A 67-amino-acid chain; its full sequence is Large ribosomal subunit protein bL35 (67 aa).

The protein belongs to the bacterial ribosomal protein bL35 family.

The polypeptide is Large ribosomal subunit protein bL35 (Rhizobium etli (strain CIAT 652)).